The primary structure comprises 358 residues: DNA polymerase IV (358 aa).

Residues 4–185 enclose the UmuC domain; the sequence is IIHIDMDCYF…LSLRKIPGVG (182 aa). Residues aspartate 8 and aspartate 103 each contribute to the Mg(2+) site. Glutamate 104 is a catalytic residue.

This sequence belongs to the DNA polymerase type-Y family. In terms of assembly, monomer. Mg(2+) serves as cofactor.

The protein localises to the cytoplasm. It catalyses the reaction DNA(n) + a 2'-deoxyribonucleoside 5'-triphosphate = DNA(n+1) + diphosphate. Its function is as follows. Poorly processive, error-prone DNA polymerase involved in untargeted mutagenesis. Copies undamaged DNA at stalled replication forks, which arise in vivo from mismatched or misaligned primer ends. These misaligned primers can be extended by PolIV. Exhibits no 3'-5' exonuclease (proofreading) activity. May be involved in translesional synthesis, in conjunction with the beta clamp from PolIII. This chain is DNA polymerase IV, found in Shewanella sp. (strain W3-18-1).